Consider the following 261-residue polypeptide: Lysosome-associated membrane glycoprotein 5 (261 aa).

A signal peptide spans 1–29 (MDLQGRAVPSVDRLRVLLMLFHTMAQIMA). Residues 30–234 (EQEVENLSGL…AVDEREQLEE (205 aa)) are Extracellular-facing. 3 N-linked (GlcNAc...) asparagine glycosylation sites follow: Asn-35, Asn-53, and Asn-126. Residues 235 to 255 (TLPLILGLILGLVIVVTLAIY) form a helical membrane-spanning segment. Over 256–261 (HVHPQK) the chain is Cytoplasmic.

This sequence belongs to the LAMP family. Glycosylated.

Its subcellular location is the cytoplasmic vesicle membrane. The protein localises to the cell membrane. It localises to the cell projection. The protein resides in the dendrite. It is found in the cytoplasmic vesicle. Its subcellular location is the secretory vesicle. The protein localises to the synaptic vesicle membrane. It localises to the growth cone membrane. The protein resides in the early endosome membrane. It is found in the recycling endosome. Its subcellular location is the endoplasmic reticulum-Golgi intermediate compartment membrane. The protein localises to the endosome membrane. In terms of biological role, plays a role in short-term synaptic plasticity in a subset of GABAergic neurons in the brain. The polypeptide is Lysosome-associated membrane glycoprotein 5 (LAMP5) (Pongo abelii (Sumatran orangutan)).